The following is a 285-amino-acid chain: Probable methyltransferase ltbC (285 aa).

A disordered region spans residues 1–22; sequence MASTGQTNNYKQGYSSQTVETQ.

The protein belongs to the class I-like SAM-binding methyltransferase superfamily. In terms of assembly, monomer.

Functionally, probable methyltransferase; part of the gene cluster that mediates the biosynthesis of luteodienoside A, a glycosylated polyketide consisting of an unusual 1-O-beta-D-glucopyranosyl-myo-inositol (glucinol) ester of 3-hydroxy-2,2,4-trimethylocta-4,6-dienoic acid. The HR-PKS ltbA produces the trimethylated polyketide chain from acetyl-CoA, malonyl-CoA and S-adenosylmethionine (SAM), and the ltbA cAT domain then uses glucinol produced by the glycosyltransferase ltbB as an offloading substrate to release luteodienoside A. Since ltbA and ltbB are sufficient for the biosynthesis of luteodienoside A, the functions of the methyltransferase ltbC and the FAD-binding monooxygenase ltbD within the pathway remain obscur. This chain is Probable methyltransferase ltbC, found in Aspergillus luteorubrus.